A 302-amino-acid polypeptide reads, in one-letter code: MNVSVVTERRTPAYSSLAAGELNGLVARALLTEARLTPKPGLVDIRNSGAHRDMDLAAFERSTTAIAPWMEKFFIMGNNTAALAAENVLVMLRPLGMACENDMLQATNGVNTHRGAIFAFGLLSAAIGRLLARGEPLEQNRICDQVARLSRNIVAHELSARKAGKLTKSETHFQCYGLSGARGEAESGFRTVRTQALPVFNRVVQEHDDTHLALLQTLLHLMAWNDDTNLVSRGGLEGLYYVQQQAQKLLWQGGVLVEGGIEAMQFLDDELILRNLSPGGSADLLAVTWFLSHFPAGSLYPE.

This sequence belongs to the CitG/MdcB family.

The catalysed reaction is 3'-dephospho-CoA + ATP = 2'-(5''-triphospho-alpha-D-ribosyl)-3'-dephospho-CoA + adenine. This Salmonella typhi protein is Probable 2-(5''-triphosphoribosyl)-3'-dephosphocoenzyme-A synthase 1.